The primary structure comprises 131 residues: Phosphoribosyl-AMP cyclohydrolase (131 aa).

Asp90 provides a ligand contact to Mg(2+). Cys91 contributes to the Zn(2+) binding site. Mg(2+)-binding residues include Asp92 and Asp94. Cys107 and Cys114 together coordinate Zn(2+).

Belongs to the PRA-CH family. Homodimer. The cofactor is Mg(2+). It depends on Zn(2+) as a cofactor.

Its subcellular location is the cytoplasm. The enzyme catalyses 1-(5-phospho-beta-D-ribosyl)-5'-AMP + H2O = 1-(5-phospho-beta-D-ribosyl)-5-[(5-phospho-beta-D-ribosylamino)methylideneamino]imidazole-4-carboxamide. It participates in amino-acid biosynthesis; L-histidine biosynthesis; L-histidine from 5-phospho-alpha-D-ribose 1-diphosphate: step 3/9. Catalyzes the hydrolysis of the adenine ring of phosphoribosyl-AMP. The polypeptide is Phosphoribosyl-AMP cyclohydrolase (Hyphomonas neptunium (strain ATCC 15444)).